The following is a 508-amino-acid chain: MGLPWYRVHTVVLNDPGRLISVHIMHTALVAGWAGSMALYELAVFDPSDPVLDPMWRQGMFVIPFMTRLGITNSWGGWSITGGTITNPGIWSYEGVAGAHIVFSGLCFLAAIWHWVYWDLEIFCDERTGKPSLDLPKIFGIHLFLSGVACFGFGAFHVTGLYGPGIWVSDPYGLTGRVQAVNPAWGVEGFDPFVPGGIASHHIAAGTLGILAGLFHLSVRPPQRLYKGLRMGNIETVLSSSIAAVFFAAFVVAGTMWYGSATTPIELFGPTRYQWDQGYFQQEIYRRVSAGLAENKSLSEAWSKIPEKLAFYDYIGNNPAKGGLFRAGSMDNGDGIAVGWLGHPIFRDKEGRELYVRRMPTFFETFPVVLVDGDGIVRADVPFRRAESKYSVEQVGVTVEFYGGELNGVSYSDPATVKKYARRAQLGEIFELDRATLKSDGVFRSSPRGWFTFGHASFALLFFFGHIWHGARTLFRDVFAGIDPDLDAQVEFGAFQKLGDPTTRRQVV.

6 consecutive transmembrane segments (helical) span residues 21 to 36 (SVHI…WAGS), 101 to 115 (IVFS…IWHW), 140 to 156 (GIHL…FGAF), 203 to 218 (IAAG…FHLS), 237 to 252 (VLSS…AFVV), and 457 to 472 (SFAL…HGAR).

It belongs to the PsbB/PsbC family. PsbB subfamily. PSII is composed of 1 copy each of membrane proteins PsbA, PsbB, PsbC, PsbD, PsbE, PsbF, PsbH, PsbI, PsbJ, PsbK, PsbL, PsbM, PsbT, PsbX, PsbY, PsbZ, Psb30/Ycf12, at least 3 peripheral proteins of the oxygen-evolving complex and a large number of cofactors. It forms dimeric complexes. The cofactor is Binds multiple chlorophylls. PSII binds additional chlorophylls, carotenoids and specific lipids..

The protein localises to the plastid. Its subcellular location is the chloroplast thylakoid membrane. Functionally, one of the components of the core complex of photosystem II (PSII). It binds chlorophyll and helps catalyze the primary light-induced photochemical processes of PSII. PSII is a light-driven water:plastoquinone oxidoreductase, using light energy to abstract electrons from H(2)O, generating O(2) and a proton gradient subsequently used for ATP formation. In Morus indica (Mulberry), this protein is Photosystem II CP47 reaction center protein.